The chain runs to 81 residues: Photosystem I iron-sulfur center (81 aa).

4Fe-4S ferredoxin-type domains follow at residues 2–31 and 39–68; these read SHTVKIYDTCIGCTQCVRACPTDVLEMVPW and VASSPRTEDCVGCKRCETACPTDFLSIRVY. The [4Fe-4S] cluster site is built by Cys11, Cys14, Cys17, Cys21, Cys48, Cys51, Cys54, and Cys58.

As to quaternary structure, the cyanobacterial PSI reaction center is composed of one copy each of PsaA,B,C,D,E,F,I,J,K,L,M and X, and forms trimeric complexes. [4Fe-4S] cluster is required as a cofactor.

The protein localises to the cellular thylakoid membrane. The catalysed reaction is reduced [plastocyanin] + hnu + oxidized [2Fe-2S]-[ferredoxin] = oxidized [plastocyanin] + reduced [2Fe-2S]-[ferredoxin]. Apoprotein for the two 4Fe-4S centers FA and FB of photosystem I (PSI); essential for photochemical activity. FB is the terminal electron acceptor of PSI, donating electrons to ferredoxin. The C-terminus interacts with PsaA/B/D and helps assemble the protein into the PSI complex. Required for binding of PsaD and PsaE to PSI. PSI is a plastocyanin/cytochrome c6-ferredoxin oxidoreductase, converting photonic excitation into a charge separation, which transfers an electron from the donor P700 chlorophyll pair to the spectroscopically characterized acceptors A0, A1, FX, FA and FB in turn. The chain is Photosystem I iron-sulfur center from Trichormus variabilis (strain ATCC 29413 / PCC 7937) (Anabaena variabilis).